A 417-amino-acid chain; its full sequence is Probable metalloprotease arx1 (417 aa).

The protein belongs to the peptidase M24 family. As to quaternary structure, component of the nucleoplasmic and cytoplasmic pre-60S ribosomal particles.

It is found in the cytoplasm. The protein localises to the nucleus. In terms of biological role, probable metalloprotease involved in proper assembly of pre-ribosomal particles during the biogenesis of the 60S ribosomal subunit. Accompanies the pre-60S particles to the cytoplasm. The sequence is that of Probable metalloprotease arx1 (arx1) from Schizosaccharomyces pombe (strain 972 / ATCC 24843) (Fission yeast).